The primary structure comprises 92 residues: UPF0335 protein BMEI0289 (92 aa).

It belongs to the UPF0335 family.

The chain is UPF0335 protein BMEI0289 from Brucella melitensis biotype 1 (strain ATCC 23456 / CCUG 17765 / NCTC 10094 / 16M).